A 115-amino-acid chain; its full sequence is MARAKNGTVHVARRKRILKKTKGFWGTKKSNYKKAKDTLRKGMMYATRDRKARKRDFRRLWISRISAALSDTGISYSRFIEGLLKSNIKINRKILSNLAIEDAEAFKKIVLEIRR.

The protein belongs to the bacterial ribosomal protein bL20 family.

Functionally, binds directly to 23S ribosomal RNA and is necessary for the in vitro assembly process of the 50S ribosomal subunit. It is not involved in the protein synthesizing functions of that subunit. This Borrelia garinii subsp. bavariensis (strain ATCC BAA-2496 / DSM 23469 / PBi) (Borreliella bavariensis) protein is Large ribosomal subunit protein bL20.